The following is a 314-amino-acid chain: 4-hydroxy-3-methylbut-2-enyl diphosphate reductase (314 aa).

Cys-12 serves as a coordination point for [4Fe-4S] cluster. (2E)-4-hydroxy-3-methylbut-2-enyl diphosphate contacts are provided by His-41 and His-74. 2 residues coordinate dimethylallyl diphosphate: His-41 and His-74. His-41 and His-74 together coordinate isopentenyl diphosphate. Cys-96 lines the [4Fe-4S] cluster pocket. His-124 serves as a coordination point for (2E)-4-hydroxy-3-methylbut-2-enyl diphosphate. His-124 is a binding site for dimethylallyl diphosphate. Isopentenyl diphosphate is bound at residue His-124. Glu-126 acts as the Proton donor in catalysis. Thr-167 contributes to the (2E)-4-hydroxy-3-methylbut-2-enyl diphosphate binding site. Cys-197 lines the [4Fe-4S] cluster pocket. Positions 225, 226, 227, and 269 each coordinate (2E)-4-hydroxy-3-methylbut-2-enyl diphosphate. Residues Ser-225, Ser-226, Asn-227, and Ser-269 each contribute to the dimethylallyl diphosphate site. Residues Ser-225, Ser-226, Asn-227, and Ser-269 each coordinate isopentenyl diphosphate.

The protein belongs to the IspH family. [4Fe-4S] cluster is required as a cofactor.

It catalyses the reaction isopentenyl diphosphate + 2 oxidized [2Fe-2S]-[ferredoxin] + H2O = (2E)-4-hydroxy-3-methylbut-2-enyl diphosphate + 2 reduced [2Fe-2S]-[ferredoxin] + 2 H(+). The enzyme catalyses dimethylallyl diphosphate + 2 oxidized [2Fe-2S]-[ferredoxin] + H2O = (2E)-4-hydroxy-3-methylbut-2-enyl diphosphate + 2 reduced [2Fe-2S]-[ferredoxin] + 2 H(+). The protein operates within isoprenoid biosynthesis; dimethylallyl diphosphate biosynthesis; dimethylallyl diphosphate from (2E)-4-hydroxy-3-methylbutenyl diphosphate: step 1/1. It participates in isoprenoid biosynthesis; isopentenyl diphosphate biosynthesis via DXP pathway; isopentenyl diphosphate from 1-deoxy-D-xylulose 5-phosphate: step 6/6. Its function is as follows. Catalyzes the conversion of 1-hydroxy-2-methyl-2-(E)-butenyl 4-diphosphate (HMBPP) into a mixture of isopentenyl diphosphate (IPP) and dimethylallyl diphosphate (DMAPP). Acts in the terminal step of the DOXP/MEP pathway for isoprenoid precursor biosynthesis. The sequence is that of 4-hydroxy-3-methylbut-2-enyl diphosphate reductase from Aliivibrio salmonicida (strain LFI1238) (Vibrio salmonicida (strain LFI1238)).